The sequence spans 49 residues: Large ribosomal subunit protein bL33 (49 aa).

Belongs to the bacterial ribosomal protein bL33 family.

This chain is Large ribosomal subunit protein bL33 (rpmG), found in Thermotoga maritima (strain ATCC 43589 / DSM 3109 / JCM 10099 / NBRC 100826 / MSB8).